We begin with the raw amino-acid sequence, 804 residues long: Phenylalanine--tRNA ligase beta subunit (804 aa).

The region spanning 39 to 155 (EEGLKKLVVG…ADVKPGQDVY (117 aa)) is the tRNA-binding domain. One can recognise a B5 domain in the interval 408–483 (REPVVVKTTV…RIYGYDNLKS (76 aa)). Residues aspartate 461, aspartate 467, glutamate 470, and glutamate 471 each coordinate Mg(2+). An FDX-ACB domain is found at 711–804 (PKFPAIERDL…LENDLDIKVR (94 aa)).

It belongs to the phenylalanyl-tRNA synthetase beta subunit family. Type 1 subfamily. In terms of assembly, tetramer of two alpha and two beta subunits. Mg(2+) serves as cofactor.

The protein localises to the cytoplasm. It catalyses the reaction tRNA(Phe) + L-phenylalanine + ATP = L-phenylalanyl-tRNA(Phe) + AMP + diphosphate + H(+). The sequence is that of Phenylalanine--tRNA ligase beta subunit from Lactobacillus acidophilus (strain ATCC 700396 / NCK56 / N2 / NCFM).